Here is a 359-residue protein sequence, read N- to C-terminus: Chorismate synthase (359 aa).

Arg48 and Arg54 together coordinate NADP(+). FMN is bound by residues 125 to 127, 243 to 244, Gly283, 298 to 302, and Arg324; these read RSS, NA, and KPTSS.

It belongs to the chorismate synthase family. In terms of assembly, homotetramer. The cofactor is FMNH2.

The enzyme catalyses 5-O-(1-carboxyvinyl)-3-phosphoshikimate = chorismate + phosphate. Its pathway is metabolic intermediate biosynthesis; chorismate biosynthesis; chorismate from D-erythrose 4-phosphate and phosphoenolpyruvate: step 7/7. Its function is as follows. Catalyzes the anti-1,4-elimination of the C-3 phosphate and the C-6 proR hydrogen from 5-enolpyruvylshikimate-3-phosphate (EPSP) to yield chorismate, which is the branch point compound that serves as the starting substrate for the three terminal pathways of aromatic amino acid biosynthesis. This reaction introduces a second double bond into the aromatic ring system. The protein is Chorismate synthase of Mannheimia succiniciproducens (strain KCTC 0769BP / MBEL55E).